The chain runs to 436 residues: GTPase Obg (436 aa).

The Obg domain occupies 2–160; the sequence is SMFLDTAKVS…RELALELKIL (159 aa). The OBG-type G domain maps to 161–338; sequence ADVGLVGFPS…LLDATAQLLA (178 aa). GTP is bound by residues 167–174, 192–196, 214–217, 284–287, and 319–321; these read GFPSVGKS, FTTIV, DLPG, NKMD, and SGI. Residues Ser-174 and Thr-194 each contribute to the Mg(2+) site. Residues 358–436 enclose the OCT domain; it reads GFEEEEKAFD…IGKFEFEFVD (79 aa).

The protein belongs to the TRAFAC class OBG-HflX-like GTPase superfamily. OBG GTPase family. As to quaternary structure, monomer. Mg(2+) is required as a cofactor.

Its subcellular location is the cytoplasm. Its function is as follows. An essential GTPase which binds GTP, GDP and possibly (p)ppGpp with moderate affinity, with high nucleotide exchange rates and a fairly low GTP hydrolysis rate. Plays a role in control of the cell cycle, stress response, ribosome biogenesis and in those bacteria that undergo differentiation, in morphogenesis control. This is GTPase Obg from Streptococcus mutans serotype c (strain ATCC 700610 / UA159).